The following is a 66-amino-acid chain: Xenoxin-3 (66 aa).

Intrachain disulfides connect Cys-3/Cys-24, Cys-17/Cys-37, Cys-43/Cys-58, and Cys-59/Cys-64.

In terms of tissue distribution, expressed by the skin dorsal glands.

The protein localises to the secreted. Its function is as follows. Lacks alpha-neurotoxic activity, has apparently no antibacterial activity, nor anti-coagulant potency. The protein is Xenoxin-3 of Xenopus laevis (African clawed frog).